Consider the following 456-residue polypeptide: Sulfoacetaldehyde dehydrogenase (456 aa).

213–218 serves as a coordination point for NAD(+); the sequence is GGTAAA. Residues Glu-233 and Cys-267 contribute to the active site.

This sequence belongs to the aldehyde dehydrogenase family. In terms of assembly, homotetramer.

It catalyses the reaction sulfoacetaldehyde + NAD(+) + H2O = sulfoacetate + NADH + 2 H(+). In terms of biological role, mediates conversion of 2-sulfoacetaldehyde into sulfoacetate. The enzyme is specific for NAD; NADP is not a substrate. Part of a pathway that can utilize the amino group of taurine as a sole source of nitrogen for growth. This is Sulfoacetaldehyde dehydrogenase (safD) from Neptuniibacter caesariensis.